The following is a 357-amino-acid chain: Snake venom metalloproteinase H4 (357 aa).

The first 6 residues, 1-6 (FPYQGS), serve as a signal peptide directing secretion. Positions 7–176 (SIMLESGKVN…KKASQLIVST (170 aa)) are excised as a propeptide. One can recognise a Peptidase M12B domain in the interval 180 to 357 (RYMEIVIVVD…EVIKYFLDSK (178 aa)). Position 316 (H316) interacts with Zn(2+). The active site involves E317. H320 and H326 together coordinate Zn(2+). A disulfide bridge connects residues C333 and C339.

Belongs to the venom metalloproteinase (M12B) family. P-I subfamily. Monomer. Zn(2+) is required as a cofactor. Expressed by the venom gland.

It localises to the secreted. In terms of biological role, snake venom metalloproteinase that impairs hemostasis in the envenomed animal. This chain is Snake venom metalloproteinase H4, found in Deinagkistrodon acutus (Hundred-pace snake).